The primary structure comprises 359 residues: MHAERRSGPVELLGLDRPRLAAFFDTLGEKRFRARQIMQWLHQRHVYDFDEMTDLSKALRQRLREHARVGLPEVAADQQASDGTRKWVVRLADGNCVEAVYIPEPKRGTLCISSQAGCPMGCTFCATGEGGFSRNLTAAEIVGQVHVARQHLPEGAITNIVFMGMGEPLLNFDPVISASRVFTDDYGFVLSKRRVTISTSGVVHAIERMQRVTDVSLAVSLHAPNNELRNQLVPLNRKNPLERLLPACHAYIAEKPHRRITWEYVMLDGVNDQDEHARELLQRLRGIPSKVNLIPFNPYPGARYGRTPDRQVRRFADRLLEHGLTATIRETRGDDIDGACGQLVGEIRDARASKVARPA.

Residue glutamate 98 is the Proton acceptor of the active site. Residues 104-329 form the Radical SAM core domain; sequence EPKRGTLCIS…LEHGLTATIR (226 aa). Residues cysteine 111 and cysteine 340 are joined by a disulfide bond. Residues cysteine 118, cysteine 122, and cysteine 125 each contribute to the [4Fe-4S] cluster site. S-adenosyl-L-methionine is bound by residues 166–167, serine 198, 220–222, and asparagine 297; these read GE and SLH. Cysteine 340 functions as the S-methylcysteine intermediate in the catalytic mechanism.

Belongs to the radical SAM superfamily. RlmN family. It depends on [4Fe-4S] cluster as a cofactor.

It localises to the cytoplasm. The catalysed reaction is adenosine(2503) in 23S rRNA + 2 reduced [2Fe-2S]-[ferredoxin] + 2 S-adenosyl-L-methionine = 2-methyladenosine(2503) in 23S rRNA + 5'-deoxyadenosine + L-methionine + 2 oxidized [2Fe-2S]-[ferredoxin] + S-adenosyl-L-homocysteine. The enzyme catalyses adenosine(37) in tRNA + 2 reduced [2Fe-2S]-[ferredoxin] + 2 S-adenosyl-L-methionine = 2-methyladenosine(37) in tRNA + 5'-deoxyadenosine + L-methionine + 2 oxidized [2Fe-2S]-[ferredoxin] + S-adenosyl-L-homocysteine. Specifically methylates position 2 of adenine 2503 in 23S rRNA and position 2 of adenine 37 in tRNAs. m2A2503 modification seems to play a crucial role in the proofreading step occurring at the peptidyl transferase center and thus would serve to optimize ribosomal fidelity. The polypeptide is Dual-specificity RNA methyltransferase RlmN (Halorhodospira halophila (strain DSM 244 / SL1) (Ectothiorhodospira halophila (strain DSM 244 / SL1))).